The chain runs to 81 residues: Toxin TdNa10 (81 aa).

Positions 1-20 are cleaved as a signal peptide; the sequence is MWTFAIVLAFLLIGLDEGEA. Residues 21–81 form the LCN-type CS-alpha/beta domain; that stretch reads LDGYPLSKNN…KMYPGELPCH (61 aa). Cystine bridges form between cysteine 32–cysteine 80, cysteine 36–cysteine 57, cysteine 42–cysteine 62, and cysteine 46–cysteine 64.

Belongs to the long (4 C-C) scorpion toxin superfamily. Sodium channel inhibitor family. Beta subfamily. In terms of tissue distribution, expressed by the venom gland.

Its subcellular location is the secreted. Its function is as follows. Alpha toxins bind voltage-independently at site-3 of sodium channels (Nav) and inhibit the inactivation of the activated channels, thereby blocking neuronal transmission. This toxin binds, in vitro, to sodium channels and inhibits the inactivation of the activated channels. Seems not toxic to mice, crickets and sweet-water shrimps. The chain is Toxin TdNa10 from Tityus discrepans (Venezuelan scorpion).